The sequence spans 339 residues: Meiotic recombination protein rec7 (339 aa).

Its function is as follows. May be involved primarily in the early steps of meiotic recombination. The sequence is that of Meiotic recombination protein rec7 (rec7) from Schizosaccharomyces pombe (strain 972 / ATCC 24843) (Fission yeast).